Consider the following 272-residue polypeptide: HMP-PP phosphatase (272 aa).

Residue Asp8 is the Nucleophile of the active site. Mg(2+) contacts are provided by Asp8, Asp10, and Asp212.

Belongs to the HAD-like hydrolase superfamily. Cof family. The cofactor is Mg(2+).

It carries out the reaction 4-amino-2-methyl-5-(diphosphooxymethyl)pyrimidine + H2O = 4-amino-2-methyl-5-(phosphooxymethyl)pyrimidine + phosphate + H(+). Its function is as follows. Catalyzes the hydrolysis of 4-amino-2-methyl-5-hydroxymethylpyrimidine pyrophosphate (HMP-PP) to 4-amino-2-methyl-5-hydroxymethylpyrimidine phosphate (HMP-P). This is HMP-PP phosphatase from Escherichia coli O6:H1 (strain CFT073 / ATCC 700928 / UPEC).